The following is a 94-amino-acid chain: Evasin P1172 (94 aa).

Cystine bridges form between Cys-35-Cys-54, Cys-39-Cys-56, and Cys-50-Cys-67. N-linked (GlcNAc...) asparagine glycans are attached at residues Asn-38, Asn-44, Asn-53, and Asn-80.

Its subcellular location is the secreted. In terms of biological role, salivary chemokine-binding protein which binds to host chemokines CXCL1, CXCL2, CXCL5 and CXCL8. This is Evasin P1172 from Ixodes ricinus (Common tick).